Consider the following 490-residue polypeptide: Cobyric acid synthase (490 aa).

Residues 251–444 enclose the GATase cobBQ-type domain; that stretch reads GLTIAVIHLP…LHGIFANDAF (194 aa). The active-site Nucleophile is C329. Residue H436 is part of the active site.

This sequence belongs to the CobB/CobQ family. CobQ subfamily.

The protein operates within cofactor biosynthesis; adenosylcobalamin biosynthesis. Its function is as follows. Catalyzes amidations at positions B, D, E, and G on adenosylcobyrinic A,C-diamide. NH(2) groups are provided by glutamine, and one molecule of ATP is hydrogenolyzed for each amidation. This Roseiflexus castenholzii (strain DSM 13941 / HLO8) protein is Cobyric acid synthase.